Consider the following 370-residue polypeptide: Adaptive-response sensory kinase SasA (370 aa).

Residues 152-365 form the Histidine kinase domain; the sequence is MVAHELRTPL…CFYLTVPVWQ (214 aa). Phosphohistidine; by autocatalysis is present on histidine 155.

In terms of assembly, homooligomerizes. Interacts with KaiC. Participates in the KaiBC complex, whose core is composed of a KaiC homohexamer and 6 KaiB.

It carries out the reaction ATP + protein L-histidine = ADP + protein N-phospho-L-histidine.. Functionally, member of the two-component regulatory system SasA/RpaA involved in genome-wide circadian gene expression. One of several clock output pathways. Participates in the Kai clock protein complex, the main circadian regulator in cyanobacteria, via its interaction with KaiC. KaiC enhances the autophosphorylation activity of SasA, which then transfers its phosphate group to RpaA to activate it. In addition to its output function, recruits fold-shifted KaiB (KaiB(fs)) to KaiC to cooperatively form the KaiB(6):KaiC(6) complex (independent of SasA kinase activity). Required for robustness of the circadian rhythm of gene expression and is involved in clock output, also required for adaptation to light/dark cycles. The sequence is that of Adaptive-response sensory kinase SasA from Prochlorococcus marinus (strain MIT 9313).